We begin with the raw amino-acid sequence, 212 residues long: Telomere repeats-binding bouquet formation protein 2 (212 aa).

This sequence belongs to the TERB2 family. As to quaternary structure, component of the MAJIN-TERB1-TERB2 complex.

Meiosis-specific telomere-associated protein involved in meiotic telomere attachment to the nucleus inner membrane, a crucial step for homologous pairing and synapsis. Component of the MAJIN-TERB1-TERB2 complex, which promotes telomere cap exchange by mediating attachment of telomeric DNA to the inner nuclear membrane and replacement of the protective cap of telomeric chromosomes: in early meiosis, the MAJIN-TERB1-TERB2 complex associates with telomeric DNA and the shelterin/telosome complex. During prophase, the complex matures and promotes release of the shelterin/telosome complex from telomeric DNA. This chain is Telomere repeats-binding bouquet formation protein 2, found in Danio rerio (Zebrafish).